A 248-amino-acid chain; its full sequence is Fasciclin-like arabinogalactan protein 19 (248 aa).

The N-terminal stretch at 1–29 is a signal peptide; it reads MAKISSASCFRAIFLGALIILCLPHPSTG. One can recognise an FAS1 domain in the interval 35 to 166; sequence LERAIAILRV…IAVHGLADLL (132 aa). Residues N114 and N136 are each glycosylated (N-linked (GlcNAc...) asparagine). The segment covering 213–226 has biased composition (low complexity); sequence SPSVEEVSPSPSWG. The interval 213-248 is disordered; it reads SPSVEEVSPSPSWGEGEEDFIVGDEGGPLDGRNNGF.

It belongs to the fasciclin-like AGP family.

The protein resides in the secreted. Functionally, may be a cell surface adhesion protein. In Arabidopsis thaliana (Mouse-ear cress), this protein is Fasciclin-like arabinogalactan protein 19 (FLA19).